A 349-amino-acid polypeptide reads, in one-letter code: UDP-N-acetylenolpyruvoylglucosamine reductase (349 aa).

The FAD-binding PCMH-type domain maps to 25-213; sequence VGPVARRLVT…VEQGERTDPQ (189 aa). Arg165 is an active-site residue. Ser242 (proton donor) is an active-site residue. Glu341 is a catalytic residue.

This sequence belongs to the MurB family. The cofactor is FAD.

Its subcellular location is the cytoplasm. The enzyme catalyses UDP-N-acetyl-alpha-D-muramate + NADP(+) = UDP-N-acetyl-3-O-(1-carboxyvinyl)-alpha-D-glucosamine + NADPH + H(+). It functions in the pathway cell wall biogenesis; peptidoglycan biosynthesis. Its function is as follows. Cell wall formation. The chain is UDP-N-acetylenolpyruvoylglucosamine reductase from Mycolicibacterium gilvum (strain PYR-GCK) (Mycobacterium gilvum (strain PYR-GCK)).